Consider the following 761-residue polypeptide: 52 kDa repressor of the inhibitor of the protein kinase (761 aa).

The THAP-type zinc finger occupies 1-86 (MPNFCAAPNC…LRDNAIPTIF (86 aa)). Basic and acidic residues predominate over residues 116–132 (QKKIDETSEQEQKHKET). Residues 116–149 (QKKIDETSEQEQKHKETNNSNAQNPSEEEGEGQD) are disordered. Residue Ser-566 is modified to Phosphoserine.

In terms of assembly, interacts with DNAJC3, probably sequestring it.

Its function is as follows. Upstream regulator of interferon-induced serine/threonine protein kinase R (PKR). May block the PKR-inhibitory function of DNAJC3, resulting in restoration of kinase activity and suppression of cell growth. The protein is 52 kDa repressor of the inhibitor of the protein kinase of Homo sapiens (Human).